A 59-amino-acid chain; its full sequence is Large ribosomal subunit protein uL30 (59 aa).

It belongs to the universal ribosomal protein uL30 family. As to quaternary structure, part of the 50S ribosomal subunit.

This Staphylococcus epidermidis (strain ATCC 12228 / FDA PCI 1200) protein is Large ribosomal subunit protein uL30.